A 235-amino-acid polypeptide reads, in one-letter code: 5'-methylthioadenosine/S-adenosylhomocysteine nucleosidase (235 aa).

Residue Glu-12 is the Proton acceptor of the active site. Residues Gly-78, Ile-152, and 173–174 (ME) each bind substrate. Catalysis depends on Asp-197, which acts as the Proton donor.

The protein belongs to the PNP/UDP phosphorylase family. MtnN subfamily. In terms of assembly, homodimer.

It catalyses the reaction S-adenosyl-L-homocysteine + H2O = S-(5-deoxy-D-ribos-5-yl)-L-homocysteine + adenine. The enzyme catalyses S-methyl-5'-thioadenosine + H2O = 5-(methylsulfanyl)-D-ribose + adenine. The catalysed reaction is 5'-deoxyadenosine + H2O = 5-deoxy-D-ribose + adenine. The protein operates within amino-acid biosynthesis; L-methionine biosynthesis via salvage pathway; S-methyl-5-thio-alpha-D-ribose 1-phosphate from S-methyl-5'-thioadenosine (hydrolase route): step 1/2. Its function is as follows. Catalyzes the irreversible cleavage of the glycosidic bond in both 5'-methylthioadenosine (MTA) and S-adenosylhomocysteine (SAH/AdoHcy) to adenine and the corresponding thioribose, 5'-methylthioribose and S-ribosylhomocysteine, respectively. Also cleaves 5'-deoxyadenosine, a toxic by-product of radical S-adenosylmethionine (SAM) enzymes, into 5-deoxyribose and adenine. Thus, is required for in vivo function of the radical SAM enzymes biotin synthase and lipoic acid synthase, that are inhibited by 5'-deoxyadenosine accumulation. The chain is 5'-methylthioadenosine/S-adenosylhomocysteine nucleosidase from Buchnera aphidicola subsp. Schizaphis graminum (strain Sg).